Here is a 143-residue protein sequence, read N- to C-terminus: ATP synthase epsilon chain (143 aa).

The protein belongs to the ATPase epsilon chain family. As to quaternary structure, F-type ATPases have 2 components, CF(1) - the catalytic core - and CF(0) - the membrane proton channel. CF(1) has five subunits: alpha(3), beta(3), gamma(1), delta(1), epsilon(1). CF(0) has three main subunits: a, b and c.

Its subcellular location is the cell inner membrane. Its function is as follows. Produces ATP from ADP in the presence of a proton gradient across the membrane. The sequence is that of ATP synthase epsilon chain from Dichelobacter nodosus (strain VCS1703A).